Here is a 245-residue protein sequence, read N- to C-terminus: 5-oxoprolinase subunit A (245 aa).

Belongs to the LamB/PxpA family. As to quaternary structure, forms a complex composed of PxpA, PxpB and PxpC.

It carries out the reaction 5-oxo-L-proline + ATP + 2 H2O = L-glutamate + ADP + phosphate + H(+). Its function is as follows. Catalyzes the cleavage of 5-oxoproline to form L-glutamate coupled to the hydrolysis of ATP to ADP and inorganic phosphate. The protein is 5-oxoprolinase subunit A of Cronobacter sakazakii (strain ATCC BAA-894) (Enterobacter sakazakii).